We begin with the raw amino-acid sequence, 484 residues long: Glycogen synthase (484 aa).

Residue Lys21 coordinates ADP-alpha-D-glucose.

It belongs to the glycosyltransferase 1 family. Bacterial/plant glycogen synthase subfamily.

The enzyme catalyses [(1-&gt;4)-alpha-D-glucosyl](n) + ADP-alpha-D-glucose = [(1-&gt;4)-alpha-D-glucosyl](n+1) + ADP + H(+). The protein operates within glycan biosynthesis; glycogen biosynthesis. In terms of biological role, synthesizes alpha-1,4-glucan chains using ADP-glucose. The sequence is that of Glycogen synthase from Pseudomonas syringae pv. tomato (strain ATCC BAA-871 / DC3000).